An 87-amino-acid chain; its full sequence is Probable Fe(2+)-trafficking protein (87 aa).

It belongs to the Fe(2+)-trafficking protein family.

Could be a mediator in iron transactions between iron acquisition and iron-requiring processes, such as synthesis and/or repair of Fe-S clusters in biosynthetic enzymes. This is Probable Fe(2+)-trafficking protein from Francisella philomiragia subsp. philomiragia (strain ATCC 25017 / CCUG 19701 / FSC 153 / O#319-036).